The primary structure comprises 201 residues: Imidazoleglycerol-phosphate dehydratase (201 aa).

The protein belongs to the imidazoleglycerol-phosphate dehydratase family.

Its subcellular location is the cytoplasm. The enzyme catalyses D-erythro-1-(imidazol-4-yl)glycerol 3-phosphate = 3-(imidazol-4-yl)-2-oxopropyl phosphate + H2O. It participates in amino-acid biosynthesis; L-histidine biosynthesis; L-histidine from 5-phospho-alpha-D-ribose 1-diphosphate: step 6/9. The protein is Imidazoleglycerol-phosphate dehydratase of Prochlorococcus marinus (strain AS9601).